We begin with the raw amino-acid sequence, 366 residues long: Galactoside alpha-(1,2)-fucosyltransferase 1 (366 aa).

Residues 1–8 (MWPRSHRH) are Cytoplasmic-facing. The chain crosses the membrane as a helical; Signal-anchor for type II membrane protein span at residues 9–25 (LCLAFLLVCVLSAISFL). Residues 26-366 (IHFHQDSIRH…LSPLWPLAEP (341 aa)) lie on the Lumenal side of the membrane. N-linked (GlcNAc...) asparagine glycans are attached at residues Asn66, Asn302, and Asn328.

Belongs to the glycosyltransferase 11 family.

The protein localises to the golgi apparatus. The protein resides in the golgi stack membrane. The enzyme catalyses a beta-D-galactosyl-(1-&gt;4)-N-acetyl-beta-D-glucosaminyl derivative + GDP-beta-L-fucose = an alpha-L-Fuc-(1-&gt;2)-beta-D-Gal-(1-&gt;4)-beta-D-GlcNAc derivative + GDP + H(+). It catalyses the reaction a ganglioside GA1 + GDP-beta-L-fucose = a ganglioside Fuc-GA1 + GDP + H(+). It carries out the reaction a beta-D-Gal-(1-&gt;3)-beta-D-GlcNAc-(1-&gt;3)-beta-D-Gal-(1-&gt;4)-beta-D-Glc-(1&lt;-&gt;1')-Cer(d18:1(4E)) + GDP-beta-L-fucose = alpha-L-fucosyl-(1-&gt;2)- beta-D-galactosyl-(1-&gt;3)-N-acetyl-beta-D-glucosaminyl-(1-&gt;3)-beta-D-galactosyl-(1-&gt;4)-beta-D-glucosyl-(1&lt;-&gt;1')-N-acylsphing-4-enine + GDP + H(+). The catalysed reaction is a neolactoside nLc4Cer(d18:1(4E)) + GDP-beta-L-fucose = a neolactoside IV(2)-alpha-Fuc-nLc4Cer(d18:1(4E)) + GDP + H(+). The enzyme catalyses a ganglioside GM1 + GDP-beta-L-fucose = a ganglioside Fuc-GM1 + GDP + H(+). It catalyses the reaction beta-D-galactosyl-(1-&gt;3)-N-acetyl-D-galactosamine + GDP-beta-L-fucose = alpha-L-fucosyl-(1-&gt;2)-beta-D-galactosyl-(1-&gt;3)-N-acetyl-D-galactosamine + GDP + H(+). Its pathway is protein modification; protein glycosylation. In terms of biological role, catalyzes the transfer of L-fucose, from a guanosine diphosphate-beta-L-fucose, to the terminal galactose residue of glycoconjugates through an alpha(1,2) linkage leading to H antigen synthesis that is an intermediate substrate in the synthesis of ABO blood group antigens. H antigen is essential for maturation of the glomerular layer of the main olfactory bulb, in cell migration and early cell-cell contacts during tumor associated angiogenesis. Preferentially fucosylates soluble lactose and to a lesser extent fucosylates glycolipids gangliosides GA1 and GM1a. This is Galactoside alpha-(1,2)-fucosyltransferase 1 from Saimiri sciureus (Common squirrel monkey).